Reading from the N-terminus, the 127-residue chain is MFFPIVWLSVLLIISKSFAREIRLSRATYNEDDEEIQEVAEKAMEQVNDQTRYRNLYKLVRVISAQTQVVAGIKYYLTILAAPTTCRKGAVGMNPMKCTIDSSKPTKQFKIEVWSAPWQNTFKVTLT.

Residues 1 to 19 (MFFPIVWLSVLLIISKSFA) form the signal peptide. The Secondary area of contact signature appears at 68-72 (QVVAG). Cysteine 86 and cysteine 98 are oxidised to a cystine.

Belongs to the cystatin family.

Functionally, cysteine protease inhibitor which inhibits members of the peptidase C1 family. Does not inhibit asparaginyl endopeptidase. The polypeptide is Cystatin cpi-1 (Brugia malayi (Filarial nematode worm)).